A 629-amino-acid chain; its full sequence is Kelch-like protein 13 (629 aa).

Positions 66 to 135 (CDVTLVPGDG…IYTAKLSLNM (70 aa)) constitute a BTB domain. The 102-residue stretch at 170–271 (CVEVGRIANT…TPQDLINYVQ (102 aa)) folds into the BACK domain. Kelch repeat units follow at residues 315-363 (HLVT…VIGN), 364-415 (FLYV…ALKG), 416-462 (HLYA…VYGG), 464-509 (MYIS…TVGD), 511-561 (LYVI…VFEN), and 562-610 (KIYV…TLTV).

Component of the BCR(KLHL9-KLHL13) E3 ubiquitin ligase complex, at least composed of CUL3, KLHL9, KLHL13 and RBX1. Interacts with AURKB.

The protein operates within protein modification; protein ubiquitination. In terms of biological role, substrate-specific adapter of a BCR (BTB-CUL3-RBX1) E3 ubiquitin-protein ligase complex required for mitotic progression and cytokinesis. The BCR(KLHL9-KLHL13) E3 ubiquitin ligase complex mediates the ubiquitination of AURKB and controls the dynamic behavior of AURKB on mitotic chromosomes and thereby coordinates faithful mitotic progression and completion of cytokinesis. This Gallus gallus (Chicken) protein is Kelch-like protein 13 (KLHL13).